The chain runs to 412 residues: Peptidyl-prolyl cis-trans isomerase FKBP8 (412 aa).

Residues 1–68 (MASCAEPSEP…GQPPAEEAEQ (68 aa)) form a disordered region. Residues 22-50 (EDFEVLDGVEDAEGEEEEEEEEEEEDDLS) are compositionally biased toward acidic residues. The PPIase FKBP-type domain maps to 120-204 (GQVVTVHLQT…CLEVTLKTAV (85 aa)). Positions 149 and 151 each coordinate Ca(2+). The TPR 1 repeat unit spans residues 221–254 (ANRKRECGNAHYQRADFVLAANSYDLAIKAITSS). Residues lysine 249, lysine 271, lysine 273, and lysine 284 each participate in a glycyl lysine isopeptide (Lys-Gly) (interchain with G-Cter in ubiquitin) cross-link. TPR repeat units lie at residues 272–305 (VKCL…QPDN) and 306–339 (IKAL…EPSN). Serine 296 carries the phosphoserine modification. Glycyl lysine isopeptide (Lys-Gly) (interchain with G-Cter in ubiquitin) cross-links involve residues lysine 307, lysine 314, lysine 334, lysine 340, lysine 348, lysine 351, and lysine 352. The chain crosses the membrane as a helical span at residues 390–410 (WLFGATAVALGGVALSVVIAA).

In terms of assembly, homomultimers or heteromultimers (Potential). Forms heterodimer with calmodulin. When activated by calmodulin and calcium, interacts with the BH4 domain of BCL2 and weakly with BCL2L1/BCLX isoform Bcl-X(L). Does not bind and inhibit calcineurin. Interacts with ZFYVE27; may negatively regulate ZFYVE27 phosphorylation. As to quaternary structure, (Microbial infection) Interacts with hepatitis C/HCV protein NS5A. Requires Ca(2+) as cofactor. Post-translationally, ubiquitinated by PRKN during mitophagy, leading to its degradation and enhancement of mitophagy. Deubiquitinated by USP30. In terms of tissue distribution, widely expressed. Highest levels seen in the brain. Highly abundant in the retina.

The protein localises to the mitochondrion. Its subcellular location is the mitochondrion membrane. It catalyses the reaction [protein]-peptidylproline (omega=180) = [protein]-peptidylproline (omega=0). Functionally, constitutively inactive PPiase, which becomes active when bound to calmodulin and calcium. Seems to act as a chaperone for BCL2, targets it to the mitochondria and modulates its phosphorylation state. The BCL2/FKBP8/calmodulin/calcium complex probably interferes with the binding of BCL2 to its targets. The active form of FKBP8 may therefore play a role in the regulation of apoptosis. Involved in the inhibition of viral infection by influenza A viruses (IAV). The chain is Peptidyl-prolyl cis-trans isomerase FKBP8 (FKBP8) from Homo sapiens (Human).